We begin with the raw amino-acid sequence, 403 residues long: Phosphoglycerate kinase (403 aa).

Residues 21-23 (DFN), R36, 59-62 (HLGR), R119, and R154 each bind substrate. Residues K207, G299, E330, and 357–360 (GGDA) each bind ATP.

This sequence belongs to the phosphoglycerate kinase family. Monomer.

The protein localises to the cytoplasm. The enzyme catalyses (2R)-3-phosphoglycerate + ATP = (2R)-3-phospho-glyceroyl phosphate + ADP. It functions in the pathway carbohydrate degradation; glycolysis; pyruvate from D-glyceraldehyde 3-phosphate: step 2/5. The sequence is that of Phosphoglycerate kinase from Chlamydia trachomatis serovar L2 (strain ATCC VR-902B / DSM 19102 / 434/Bu).